Consider the following 570-residue polypeptide: High-affinity hexose transporter HXT7 (570 aa).

The Cytoplasmic portion of the chain corresponds to 1 to 60 (MSQDAAIAEQTPVEHLSAVDSASHSVLSTPSNKAERDEIKAYGEGEEHEPVVEIPKRPAS). The chain crosses the membrane as a helical span at residues 61–81 (AYVTVSIMCIMIAFGGFVFGW). Residues 82–116 (DTGTISGFINQTDFIRRFGMKHKDGTNYLSKVRTG) are Extracellular-facing. Asn91 is a glycosylation site (N-linked (GlcNAc...) asparagine). Residues 117–137 (LIVSIFNIGCAIGGIILSKLG) traverse the membrane as a helical segment. The Cytoplasmic segment spans residues 138-143 (DMYGRK). Residues 144–164 (VGLIVVVVIYIIGIIIQIASI) form a helical membrane-spanning segment. Topologically, residues 165-174 (NKWYQYFIGR) are extracellular. The chain crosses the membrane as a helical span at residues 175 to 195 (IISGLGVGGIAVLSPMLISEV). The Cytoplasmic segment spans residues 196 to 201 (SPKHLR). Residues 202–222 (GTLVSCYQLMITAGIFLGYCT) traverse the membrane as a helical segment. The Extracellular portion of the chain corresponds to 223–236 (NFGTKNYSNSVQWR). An N-linked (GlcNAc...) asparagine glycan is attached at Asn228. Residues 237 to 257 (VPLGLCFAWALFMIGGMTFVP) form a helical membrane-spanning segment. Over 258 to 340 (ESPRYLAEVG…IQSLQQLTGD (83 aa)) the chain is Cytoplasmic. Residues 341-357 (NYFFYYGTTIFKAVGLS) form a helical membrane-spanning segment. At 358-363 (DSFETS) the chain is on the extracellular side. A helical membrane pass occupies residues 364–381 (IVLGIVNFASTFVGIYVV). Residues 382-388 (ERYGRRT) lie on the Cytoplasmic side of the membrane. A helical membrane pass occupies residues 389–409 (CLLWGAASMTACMVVYASVGV). Over 410–431 (TRLWPNGQDQPSSKGAGNCMIV) the chain is Extracellular. Residues 432–452 (FACFYIFCFATTWAPIPYVVV) form a helical membrane-spanning segment. Residues 453–469 (SETFPLRVKSKAMSIAT) are Cytoplasmic-facing. The helical transmembrane segment at 470–490 (AANWLWGFLIGFFTPFITGAI) threads the bilayer. Asn491 is a topological domain (extracellular). Residues 492 to 512 (FYYGYVFMGCLVFMFFYVLLV) form a helical membrane-spanning segment. The Cytoplasmic segment spans residues 513–570 (VPETKGLTLEEVNTMWEEGVLPWKSASWVPPSRRGANYDAEEMTHDDKPLYKRMFSTK). Residue Thr556 is modified to Phosphothreonine. Lys560 is covalently cross-linked (Glycyl lysine isopeptide (Lys-Gly) (interchain with G-Cter in ubiquitin)).

The protein belongs to the major facilitator superfamily. Sugar transporter (TC 2.A.1.1) family.

It localises to the membrane. Functionally, high-affinity glucose transporter. The chain is High-affinity hexose transporter HXT7 (HXT7) from Saccharomyces cerevisiae (strain ATCC 204508 / S288c) (Baker's yeast).